Here is a 175-residue protein sequence, read N- to C-terminus: ATP synthase subunit b (175 aa).

The chain crosses the membrane as a helical span at residues 14–34; sequence LSPNPGLIFWTTVSFVIVLLI.

It belongs to the ATPase B chain family. In terms of assembly, F-type ATPases have 2 components, F(1) - the catalytic core - and F(0) - the membrane proton channel. F(1) has five subunits: alpha(3), beta(3), gamma(1), delta(1), epsilon(1). F(0) has four main subunits: a(1), b(2) and c(10-14). The alpha and beta chains form an alternating ring which encloses part of the gamma chain. F(1) is attached to F(0) by a central stalk formed by the gamma and epsilon chains, while a peripheral stalk is formed by the delta and b chains.

It localises to the cell inner membrane. In terms of biological role, f(1)F(0) ATP synthase produces ATP from ADP in the presence of a proton or sodium gradient. F-type ATPases consist of two structural domains, F(1) containing the extramembraneous catalytic core and F(0) containing the membrane proton channel, linked together by a central stalk and a peripheral stalk. During catalysis, ATP synthesis in the catalytic domain of F(1) is coupled via a rotary mechanism of the central stalk subunits to proton translocation. Component of the F(0) channel, it forms part of the peripheral stalk, linking F(1) to F(0). The sequence is that of ATP synthase subunit b from Chlorobium phaeobacteroides (strain DSM 266 / SMG 266 / 2430).